The chain runs to 532 residues: Undecaprenyl-phosphate glucose phosphotransferase (532 aa).

Helical transmembrane passes span 81 to 101, 110 to 130, 155 to 175, 183 to 203, and 344 to 364; these read QVVVLSDAFCVCLAVVACIAW, ELSGALLLANIMAAGAFFLFP, VAFGEVVFCTVLVMLSWPFGV, WLTFVVAILFVERCVGTYILH, and TASVLLLLALAPLLTLVALAI.

It belongs to the bacterial sugar transferase family.

The protein localises to the membrane. The enzyme catalyses di-trans,octa-cis-undecaprenyl phosphate + UDP-alpha-D-glucose = alpha-D-glucosyl di-trans,octa-cis-undecaprenyl diphosphate + UMP. Involved in the biosynthesis of the exopolysaccharide acetan, a water-soluble polysaccharide involved in production of bacterial cellulose (BC). The polypeptide is Undecaprenyl-phosphate glucose phosphotransferase (aceA) (Komagataeibacter xylinus (Gluconacetobacter xylinus)).